The sequence spans 109 residues: Large ribosomal subunit protein bL19 (109 aa).

The protein belongs to the bacterial ribosomal protein bL19 family.

Functionally, this protein is located at the 30S-50S ribosomal subunit interface and may play a role in the structure and function of the aminoacyl-tRNA binding site. This is Large ribosomal subunit protein bL19 from Rubrobacter xylanophilus (strain DSM 9941 / JCM 11954 / NBRC 16129 / PRD-1).